The primary structure comprises 200 residues: dITP/XTP pyrophosphatase (200 aa).

S8–K13 is a substrate binding site. Positions 40 and 69 each coordinate Mg(2+). Catalysis depends on D69, which acts as the Proton acceptor. Substrate is bound by residues S70, F154–D157, K177, and H182–R183.

Belongs to the HAM1 NTPase family. As to quaternary structure, homodimer. Mg(2+) serves as cofactor.

It catalyses the reaction XTP + H2O = XMP + diphosphate + H(+). The enzyme catalyses dITP + H2O = dIMP + diphosphate + H(+). It carries out the reaction ITP + H2O = IMP + diphosphate + H(+). Its function is as follows. Pyrophosphatase that catalyzes the hydrolysis of nucleoside triphosphates to their monophosphate derivatives, with a high preference for the non-canonical purine nucleotides XTP (xanthosine triphosphate), dITP (deoxyinosine triphosphate) and ITP. Seems to function as a house-cleaning enzyme that removes non-canonical purine nucleotides from the nucleotide pool, thus preventing their incorporation into DNA/RNA and avoiding chromosomal lesions. The protein is dITP/XTP pyrophosphatase of Coxiella burnetii (strain RSA 493 / Nine Mile phase I).